We begin with the raw amino-acid sequence, 492 residues long: Ketol-acid reductoisomerase (NADP(+)) (492 aa).

One can recognise a KARI N-terminal Rossmann domain in the interval 15–208 (AQLGKCRFMA…GGDRAGVLES (194 aa)). NADP(+) contacts are provided by residues 45 to 48 (CGAQ), arginine 68, arginine 76, serine 78, and 108 to 110 (DKQ). Histidine 132 is a catalytic residue. Glycine 158 provides a ligand contact to NADP(+). 2 consecutive KARI C-terminal knotted domains span residues 209 to 344 (SFVA…KAPP) and 345 to 485 (FEGK…MTDM). Aspartate 217, glutamate 221, glutamate 389, and glutamate 393 together coordinate Mg(2+). Serine 414 serves as a coordination point for substrate.

The protein belongs to the ketol-acid reductoisomerase family. Requires Mg(2+) as cofactor.

The catalysed reaction is (2R)-2,3-dihydroxy-3-methylbutanoate + NADP(+) = (2S)-2-acetolactate + NADPH + H(+). The enzyme catalyses (2R,3R)-2,3-dihydroxy-3-methylpentanoate + NADP(+) = (S)-2-ethyl-2-hydroxy-3-oxobutanoate + NADPH + H(+). The protein operates within amino-acid biosynthesis; L-isoleucine biosynthesis; L-isoleucine from 2-oxobutanoate: step 2/4. Its pathway is amino-acid biosynthesis; L-valine biosynthesis; L-valine from pyruvate: step 2/4. Functionally, involved in the biosynthesis of branched-chain amino acids (BCAA). Catalyzes an alkyl-migration followed by a ketol-acid reduction of (S)-2-acetolactate (S2AL) to yield (R)-2,3-dihydroxy-isovalerate. In the isomerase reaction, S2AL is rearranged via a Mg-dependent methyl migration to produce 3-hydroxy-3-methyl-2-ketobutyrate (HMKB). In the reductase reaction, this 2-ketoacid undergoes a metal-dependent reduction by NADPH to yield (R)-2,3-dihydroxy-isovalerate. The chain is Ketol-acid reductoisomerase (NADP(+)) from Edwardsiella ictaluri (strain 93-146).